An 854-amino-acid chain; its full sequence is Envelope glycoprotein B (854 aa).

Positions methionine 1–cysteine 22 are cleaved as a signal peptide. At glutamine 23 to proline 732 the chain is on the virion surface side. Asparagine 51 carries an N-linked (GlcNAc...) asparagine; by host glycan. 5 cysteine pairs are disulfide-bonded: cysteine 69/cysteine 527, cysteine 86/cysteine 483, cysteine 158/cysteine 223, cysteine 315/cysteine 362, and cysteine 552/cysteine 589. The tract at residues isoleucine 125–alanine 131 is involved in fusion and/or binding to host membrane. The N-linked (GlcNAc...) asparagine; by host glycan is linked to asparagine 180. The interval glycine 209–arginine 217 is involved in fusion and/or binding to host membrane. N-linked (GlcNAc...) asparagine; by host glycosylation is found at asparagine 258 and asparagine 311. 6 N-linked (GlcNAc...) asparagine; by host glycosylation sites follow: asparagine 364, asparagine 379, asparagine 385, asparagine 424, asparagine 564, and asparagine 630. Residues glutamine 422 to serine 443 are disordered. Residues leucine 679–lysine 730 form a hydrophobic membrane proximal region region. The helical transmembrane segment at phenylalanine 733–asparagine 753 threads the bilayer. Residues arginine 754–proline 854 lie on the Intravirion side of the membrane. The span at histidine 802–glutamate 813 shows a compositional bias: basic and acidic residues. Positions histidine 802–alanine 829 are disordered. An Internalization motif motif is present at residues tyrosine 839–leucine 842.

The protein belongs to the herpesviridae glycoprotein B family. Homotrimer; disulfide-linked. Binds to heparan sulfate proteoglycans. Interacts with gH/gL heterodimer. A proteolytic cleavage by host furin generates two subunits that remain linked by disulfide bonds.

It localises to the virion membrane. Its subcellular location is the host cell membrane. It is found in the host endosome membrane. The protein resides in the host Golgi apparatus membrane. In terms of biological role, envelope glycoprotein that forms spikes at the surface of virion envelope. Essential for the initial attachment to heparan sulfate moieties of the host cell surface proteoglycans. Involved in fusion of viral and cellular membranes leading to virus entry into the host cell. Following initial binding to its host receptors, membrane fusion is mediated by the fusion machinery composed at least of gB and the heterodimer gH/gL. May be involved in the fusion between the virion envelope and the outer nuclear membrane during virion egress. This chain is Envelope glycoprotein B, found in Connochaetes taurinus (Blue wildebeest).